The following is a 455-amino-acid chain: Epoxide hydrolase 1 (455 aa).

Residues 1–21 form a helical; Signal-anchor for type III membrane protein membrane-spanning segment; the sequence is MWLELVLASLLGFVIYWFVSR. The Cytoplasmic segment spans residues 22-455; sequence DKEETLPLGD…RKFVSLAELQ (434 aa). Asp226 acts as the Nucleophile in catalysis. Arg295 is subject to Dimethylated arginine. Tyr374 (proton donor) is an active-site residue. His431 acts as the Proton acceptor in catalysis. Lys439 bears the N6-acetyllysine mark.

The protein belongs to the peptidase S33 family.

It localises to the microsome membrane. Its subcellular location is the endoplasmic reticulum membrane. It catalyses the reaction cis-stilbene oxide + H2O = (1R,2R)-hydrobenzoin. The catalysed reaction is 1-(4-methoxyphenyl)-N-methyl-N-[(3-methyloxetan-3-yl)methyl]methanamine + H2O = 2-{[(4-methoxybenzyl)(methyl)amino]methyl}-2-methylpropane-1,3-diol. It carries out the reaction 8,9-epoxy-(5Z,11Z,14Z)-eicosatrienoate + H2O = 8,9-dihydroxy-(5Z,11Z,14Z)-eicosatrienoate. The enzyme catalyses 11,12-epoxy-(5Z,8Z,14Z)-eicosatrienoate + H2O = 11,12-dihydroxy-(5Z,8Z,14Z)-eicosatrienoate. It catalyses the reaction 2-(5Z,8Z,11Z,14Z-eicosatetraenoyl)-glycerol + H2O = glycerol + (5Z,8Z,11Z,14Z)-eicosatetraenoate + H(+). Its activity is regulated as follows. Inhibited by 10-hydroxystearamide and methoxy-arachidonyl fluorophosphate. Functionally, biotransformation enzyme that catalyzes the hydrolysis of arene and aliphatic epoxides to less reactive and more water soluble dihydrodiols by the trans addition of water. May play a role in the metabolism of endogenous lipids such as epoxide-containing fatty acids. Metabolizes the abundant endocannabinoid 2-arachidonoylglycerol (2-AG) to free arachidonic acid (AA) and glycerol. Binds 20(S)-hydroxycholesterol (20(S)-OHC). The protein is Epoxide hydrolase 1 of Rattus norvegicus (Rat).